We begin with the raw amino-acid sequence, 352 residues long: Chorismate synthase (352 aa).

Arg-48 provides a ligand contact to NADP(+). FMN is bound by residues 125 to 127, 237 to 238, Gly-278, 293 to 297, and Arg-319; these read RSS, NA, and KPTSS.

The protein belongs to the chorismate synthase family. In terms of assembly, homotetramer. FMNH2 serves as cofactor.

It carries out the reaction 5-O-(1-carboxyvinyl)-3-phosphoshikimate = chorismate + phosphate. It functions in the pathway metabolic intermediate biosynthesis; chorismate biosynthesis; chorismate from D-erythrose 4-phosphate and phosphoenolpyruvate: step 7/7. Functionally, catalyzes the anti-1,4-elimination of the C-3 phosphate and the C-6 proR hydrogen from 5-enolpyruvylshikimate-3-phosphate (EPSP) to yield chorismate, which is the branch point compound that serves as the starting substrate for the three terminal pathways of aromatic amino acid biosynthesis. This reaction introduces a second double bond into the aromatic ring system. This is Chorismate synthase from Francisella tularensis subsp. mediasiatica (strain FSC147).